Consider the following 159-residue polypeptide: Ribosome-binding factor A (159 aa).

2 stretches are compositionally biased toward basic and acidic residues: residues 118 to 128 (AADDEVAKARE) and 137 to 146 (DPYKEPRVAS). Positions 118-159 (AADDEVAKARENAQPAGDADPYKEPRVASDEDEASPDVREAD) are disordered.

It belongs to the RbfA family. In terms of assembly, monomer. Binds 30S ribosomal subunits, but not 50S ribosomal subunits or 70S ribosomes.

It is found in the cytoplasm. Functionally, one of several proteins that assist in the late maturation steps of the functional core of the 30S ribosomal subunit. Associates with free 30S ribosomal subunits (but not with 30S subunits that are part of 70S ribosomes or polysomes). Required for efficient processing of 16S rRNA. May interact with the 5'-terminal helix region of 16S rRNA. The polypeptide is Ribosome-binding factor A (Rhodococcus erythropolis (strain PR4 / NBRC 100887)).